The primary structure comprises 201 residues: MEPVSTITGKAVVLPVENIDTDQIIPARFLKVTDRSGLAAGLFEAWRYQADGTPNPDFPLNRPEAAGATILISGRNFGCGSSREHAPWALQDYGFKAVLAPSFADIFRSNSLKIGLLPVTIDQAVYDELVARYAADPQMHLTIDLATQTVTLPDGRQVHFPIDAFSKYCLLHGVDQLGFLLQQEEAIIAYEASHPQPVTTR.

The protein belongs to the LeuD family. LeuD type 1 subfamily. In terms of assembly, heterodimer of LeuC and LeuD.

It carries out the reaction (2R,3S)-3-isopropylmalate = (2S)-2-isopropylmalate. It participates in amino-acid biosynthesis; L-leucine biosynthesis; L-leucine from 3-methyl-2-oxobutanoate: step 2/4. In terms of biological role, catalyzes the isomerization between 2-isopropylmalate and 3-isopropylmalate, via the formation of 2-isopropylmaleate. This is 3-isopropylmalate dehydratase small subunit from Chloroflexus aurantiacus (strain ATCC 29366 / DSM 635 / J-10-fl).